The primary structure comprises 119 residues: MNLDQYLPVLLFILVGIGVGVVPLLLGYVLGPNRPDPAKNSPYECGFEAFEDARMKFDVRYYLVAILFILFDLEIAFLFPWAVTLQEVGVTGFVAVLVFLAILVVGFAYEWKKGALNWE.

3 helical membrane-spanning segments follow: residues 9–29 (VLLF…LGYV), 63–83 (LVAI…PWAV), and 88–108 (VGVT…VGFA).

It belongs to the complex I subunit 3 family. NDH-1 is composed of 14 different subunits. Subunits NuoA, H, J, K, L, M, N constitute the membrane sector of the complex.

The protein resides in the cell inner membrane. The enzyme catalyses a quinone + NADH + 5 H(+)(in) = a quinol + NAD(+) + 4 H(+)(out). Functionally, NDH-1 shuttles electrons from NADH, via FMN and iron-sulfur (Fe-S) centers, to quinones in the respiratory chain. The immediate electron acceptor for the enzyme in this species is believed to be ubiquinone. Couples the redox reaction to proton translocation (for every two electrons transferred, four hydrogen ions are translocated across the cytoplasmic membrane), and thus conserves the redox energy in a proton gradient. This Acidovorax sp. (strain JS42) protein is NADH-quinone oxidoreductase subunit A.